Reading from the N-terminus, the 432-residue chain is KLIDELEEYKKRYDEALKAHQADREVIDDLLVKLSNLEAEINLLRRRVSNLEEEVSRIKKDNLYFVNELNKARANLDQETLNRIDFQNQVQTLLEEIDFMRRVHDQEISELQAMAARDTTSENREYFKNELSSAIRDIRAEYDQICNMNRTDMESWYKLKVQEIQTQSTRQNLEQGYAKEEVKRLRVQLSDLRGKLADLEGRNSLLEKQMQELNYQLEDDQRSYEAALNDRDAQIRKMREECQALMMELQMLLDTKQTLDAEIAIYRKMLEGEENRAGLRQLVEQVVKTHGLSEIGETESIRVLKGETASRTSFQRSAKGNVSIQDASSDGKFILLENTHRSKEEPIGEWRLKRKIDGKREIVYTFPRDFILKPGKTVKIWARGQGVYSPPDQLVFDAEDSFGVGSNVQTILFNKEGEERASHIQRSSHTIS.

Residues K1–L111 form a coil 1B region. An IF rod domain is found at K1–A277. The tract at residues Q112–K128 is linker 12. The tract at residues N129–A277 is coil 2. The segment at G278–S432 is tail. An LTD domain is found at S310 to S427.

This sequence belongs to the intermediate filament family.

This chain is Muscle cell intermediate filament protein OV71 (OV71), found in Onchocerca volvulus.